Consider the following 376-residue polypeptide: Chaperone protein DnaJ (376 aa).

The 66-residue stretch at 5 to 70 (DFYDVLGVSK…EKKQNYDNFG (66 aa)) folds into the J domain. The segment at 137–215 (GKKQDIKFST…CNGQGNKQAS (79 aa)) adopts a CR-type zinc-finger fold. Residues C150, C153, C167, C170, C189, C192, C203, and C206 each contribute to the Zn(2+) site. CXXCXGXG motif repeat units lie at residues 150–157 (CNTCNGNG), 167–174 (CTVCGGNG), 189–196 (CPQCAGSG), and 203–210 (CTDCNGQG).

This sequence belongs to the DnaJ family. In terms of assembly, homodimer. The cofactor is Zn(2+).

The protein resides in the cytoplasm. Functionally, participates actively in the response to hyperosmotic and heat shock by preventing the aggregation of stress-denatured proteins and by disaggregating proteins, also in an autonomous, DnaK-independent fashion. Unfolded proteins bind initially to DnaJ; upon interaction with the DnaJ-bound protein, DnaK hydrolyzes its bound ATP, resulting in the formation of a stable complex. GrpE releases ADP from DnaK; ATP binding to DnaK triggers the release of the substrate protein, thus completing the reaction cycle. Several rounds of ATP-dependent interactions between DnaJ, DnaK and GrpE are required for fully efficient folding. Also involved, together with DnaK and GrpE, in the DNA replication of plasmids through activation of initiation proteins. In Pelagibacter ubique (strain HTCC1062), this protein is Chaperone protein DnaJ.